Reading from the N-terminus, the 121-residue chain is Large ribosomal subunit protein uL14c (121 aa).

Belongs to the universal ribosomal protein uL14 family. In terms of assembly, part of the 50S ribosomal subunit.

It is found in the plastid. Its subcellular location is the apicoplast. Functionally, binds to 23S rRNA. This Eimeria tenella (Coccidian parasite) protein is Large ribosomal subunit protein uL14c (rpl14).